Consider the following 875-residue polypeptide: Alanine--tRNA ligase (875 aa).

Zn(2+) contacts are provided by histidine 564, histidine 568, cysteine 666, and histidine 670.

This sequence belongs to the class-II aminoacyl-tRNA synthetase family. In terms of assembly, homotetramer. Zn(2+) serves as cofactor.

The protein localises to the cytoplasm. It carries out the reaction tRNA(Ala) + L-alanine + ATP = L-alanyl-tRNA(Ala) + AMP + diphosphate. Its function is as follows. Catalyzes the attachment of alanine to tRNA(Ala) in a two-step reaction: alanine is first activated by ATP to form Ala-AMP and then transferred to the acceptor end of tRNA(Ala). Also edits incorrectly charged Ser-tRNA(Ala) and Gly-tRNA(Ala) via its editing domain. This Yersinia enterocolitica serotype O:8 / biotype 1B (strain NCTC 13174 / 8081) protein is Alanine--tRNA ligase.